Reading from the N-terminus, the 276-residue chain is Mitochondrial outer membrane protein porin 2 (276 aa).

Phosphoserine is present on Ser-76. Thr-236 carries the phosphothreonine modification.

Belongs to the eukaryotic mitochondrial porin (TC 1.B.8.1) family. Expressed in root tips, steles, leaves, sepals, petals, stamen and pistils.

It is found in the mitochondrion outer membrane. Its function is as follows. Forms a channel through the mitochondrial outer membrane that allows diffusion of small hydrophilic molecules. The channel adopts an open conformation at low or zero membrane potential and a closed conformation at potentials above 30-40 mV. The open state has a weak anion selectivity whereas the closed state is cation-selective. Involved in plant growth and development at the vegetative and reproductive stages. Is important for leaf and pollen development and mitochondrial membrane potential steady state. May be involved in ABA-mediated early seedling development and disease resistance. The protein is Mitochondrial outer membrane protein porin 2 (VDAC2) of Arabidopsis thaliana (Mouse-ear cress).